Here is a 161-residue protein sequence, read N- to C-terminus: 2-C-methyl-D-erythritol 2,4-cyclodiphosphate synthase (161 aa).

A divalent metal cation-binding residues include D10 and H12. 4-CDP-2-C-methyl-D-erythritol 2-phosphate is bound by residues 10–12 (DVH) and 36–37 (HS). Residue H44 coordinates a divalent metal cation. 4-CDP-2-C-methyl-D-erythritol 2-phosphate contacts are provided by residues 58–60 (DIG), 134–137 (TTTE), F141, and R144.

Belongs to the IspF family. Homotrimer. A divalent metal cation serves as cofactor.

The enzyme catalyses 4-CDP-2-C-methyl-D-erythritol 2-phosphate = 2-C-methyl-D-erythritol 2,4-cyclic diphosphate + CMP. The protein operates within isoprenoid biosynthesis; isopentenyl diphosphate biosynthesis via DXP pathway; isopentenyl diphosphate from 1-deoxy-D-xylulose 5-phosphate: step 4/6. Involved in the biosynthesis of isopentenyl diphosphate (IPP) and dimethylallyl diphosphate (DMAPP), two major building blocks of isoprenoid compounds. Catalyzes the conversion of 4-diphosphocytidyl-2-C-methyl-D-erythritol 2-phosphate (CDP-ME2P) to 2-C-methyl-D-erythritol 2,4-cyclodiphosphate (ME-CPP) with a corresponding release of cytidine 5-monophosphate (CMP). The protein is 2-C-methyl-D-erythritol 2,4-cyclodiphosphate synthase of Parabacteroides distasonis (strain ATCC 8503 / DSM 20701 / CIP 104284 / JCM 5825 / NCTC 11152).